Reading from the N-terminus, the 519-residue chain is MKYRDLRDFIHGLEQRGELRRVTQPVSPVLEMTELCDRVLRAGGPALLFDAPAGHRFPVLGNLFGTPRRVALGMGVDADDEAALASLRDIGRLLSALKEPDPPKRLKDAGKLLSLAKAVWDMGPKTVSAPPCQEIVWEGDDVDLHKLPIQTCWPGDAGPLLTWGLTVTRGPNKTRQNLGIYRQQLIGRNKLIMRWLAHRGGALDFREFALKHPGQPYPVAVVLGADPATMLGAVTPVPDSLSEYQFAGLLRGARTELAKCVTPGVDALQVPARAEIVLEGFIHPQQGAPAPAPEGAPPRPAAGAAAGYEHALEGPYGDHTGYYNEQEWFPVFTVERITMRRDAIYHSTYTGKPPDEPAVLGVALNEVFVPLLQKQFAEITDFYLPPEGCSYRMAIVQMKKSYAGHAKRVMFGVWSFLRQFMYTKFIVVVDEDVNVRDWKEVIWAITTRVDPARDTVLVENTPIDYLDFASPVAGLGSKMGLDATNKWPGETQREWGRPIEMDAAVKARVDRLWTEIGLS.

Asparagine 177 contributes to the Mn(2+) binding site. Residues 180–182 (IYR), 194–196 (RWL), and 199–200 (RG) each bind prenylated FMN. A Mn(2+)-binding site is contributed by glutamate 243. Aspartate 318 acts as the Proton donor in catalysis.

It belongs to the UbiD family. As to quaternary structure, homohexamer. It depends on prenylated FMN as a cofactor. Requires Mn(2+) as cofactor.

Its subcellular location is the cell membrane. The enzyme catalyses a 4-hydroxy-3-(all-trans-polyprenyl)benzoate + H(+) = a 2-(all-trans-polyprenyl)phenol + CO2. It participates in cofactor biosynthesis; ubiquinone biosynthesis. In terms of biological role, catalyzes the decarboxylation of 3-octaprenyl-4-hydroxy benzoate to 2-octaprenylphenol, an intermediate step in ubiquinone biosynthesis. This chain is 3-octaprenyl-4-hydroxybenzoate carboxy-lyase, found in Burkholderia mallei (strain ATCC 23344).